The following is a 413-amino-acid chain: Serine hydroxymethyltransferase (413 aa).

Residues Leu-116 and 120-122 (GHL) each bind (6S)-5,6,7,8-tetrahydrofolate. N6-(pyridoxal phosphate)lysine is present on Lys-225. 349 to 351 (SPF) serves as a coordination point for (6S)-5,6,7,8-tetrahydrofolate.

The protein belongs to the SHMT family. In terms of assembly, homodimer. Pyridoxal 5'-phosphate serves as cofactor.

It is found in the cytoplasm. It carries out the reaction (6R)-5,10-methylene-5,6,7,8-tetrahydrofolate + glycine + H2O = (6S)-5,6,7,8-tetrahydrofolate + L-serine. Its pathway is one-carbon metabolism; tetrahydrofolate interconversion. It functions in the pathway amino-acid biosynthesis; glycine biosynthesis; glycine from L-serine: step 1/1. In terms of biological role, catalyzes the reversible interconversion of serine and glycine with tetrahydrofolate (THF) serving as the one-carbon carrier. This reaction serves as the major source of one-carbon groups required for the biosynthesis of purines, thymidylate, methionine, and other important biomolecules. Also exhibits THF-independent aldolase activity toward beta-hydroxyamino acids, producing glycine and aldehydes, via a retro-aldol mechanism. The sequence is that of Serine hydroxymethyltransferase from Levilactobacillus brevis (strain ATCC 367 / BCRC 12310 / CIP 105137 / JCM 1170 / LMG 11437 / NCIMB 947 / NCTC 947) (Lactobacillus brevis).